The following is a 141-amino-acid chain: Hemoglobin subunit alpha-1 (141 aa).

The Globin domain occupies 1–141; that stretch reads VLSPADKNNV…VSTVLTSKYR (141 aa). Residue histidine 58 participates in O2 binding. Position 87 (histidine 87) interacts with heme b.

The protein belongs to the globin family. Heterotetramer of two alpha chains and two beta chains. As to expression, red blood cells.

Functionally, involved in oxygen transport from the lung to the various peripheral tissues. The protein is Hemoglobin subunit alpha-1 of Varecia variegata (Black-and-white ruffed lemur).